Reading from the N-terminus, the 202-residue chain is uncharacterized protein (202 aa).

This is an uncharacterized protein from Archaeoglobus fulgidus (strain ATCC 49558 / DSM 4304 / JCM 9628 / NBRC 100126 / VC-16).